The sequence spans 378 residues: Mannitol-1-phosphate 5-dehydrogenase (378 aa).

4–15 (SVHFGAGNIGRG) is a binding site for NAD(+).

The protein belongs to the mannitol dehydrogenase family.

The enzyme catalyses D-mannitol 1-phosphate + NAD(+) = beta-D-fructose 6-phosphate + NADH + H(+). The chain is Mannitol-1-phosphate 5-dehydrogenase from Streptococcus pneumoniae serotype 4 (strain ATCC BAA-334 / TIGR4).